The primary structure comprises 400 residues: Acetate kinase (400 aa).

Residue Asn10 participates in Mg(2+) binding. ATP is bound at residue Lys17. A substrate-binding site is contributed by Arg91. The active-site Proton donor/acceptor is Asp150. ATP-binding positions include 210 to 214 (HLGNG), 285 to 287 (DCR), and 333 to 337 (GIGEN). Glu387 is a Mg(2+) binding site.

Belongs to the acetokinase family. In terms of assembly, homodimer. It depends on Mg(2+) as a cofactor. The cofactor is Mn(2+).

The protein resides in the cytoplasm. It catalyses the reaction acetate + ATP = acetyl phosphate + ADP. Its pathway is metabolic intermediate biosynthesis; acetyl-CoA biosynthesis; acetyl-CoA from acetate: step 1/2. In terms of biological role, catalyzes the formation of acetyl phosphate from acetate and ATP. Can also catalyze the reverse reaction. The protein is Acetate kinase of Pectobacterium atrosepticum (strain SCRI 1043 / ATCC BAA-672) (Erwinia carotovora subsp. atroseptica).